The following is a 275-amino-acid chain: Putative replication protein (275 aa).

Residues 98–198 (SKAICFTPYD…RILKISEDYF (101 aa)) form the BRCT domain.

This chain is Putative replication protein, found in Wigglesworthia glossinidia brevipalpis.